We begin with the raw amino-acid sequence, 160 residues long: Protein P5 (160 aa).

The chain crosses the membrane as a helical span at residues 7–23 (FLATAAALGVAMFPTQI).

It localises to the virion membrane. In Pseudoalteromonas espejiana (Bacteriophage PM2), this protein is Protein P5 (V).